The chain runs to 145 residues: uncharacterized protein (145 aa).

This is an uncharacterized protein from Bacillus subtilis (strain 168).